The primary structure comprises 645 residues: 1,4-alpha-glucan branching enzyme GlgB (645 aa).

D309 serves as the catalytic Nucleophile. The Proton donor role is filled by E352. The disordered stretch occupies residues V619–R645. Over residues R636–R645 the composition is skewed to polar residues.

The protein belongs to the glycosyl hydrolase 13 family. GlgB subfamily. Monomer.

It carries out the reaction Transfers a segment of a (1-&gt;4)-alpha-D-glucan chain to a primary hydroxy group in a similar glucan chain.. It functions in the pathway glycan biosynthesis; glycogen biosynthesis. Functionally, catalyzes the formation of the alpha-1,6-glucosidic linkages in glycogen by scission of a 1,4-alpha-linked oligosaccharide from growing alpha-1,4-glucan chains and the subsequent attachment of the oligosaccharide to the alpha-1,6 position. The polypeptide is 1,4-alpha-glucan branching enzyme GlgB (Bacillus cereus (strain Q1)).